Reading from the N-terminus, the 76-residue chain is Putative small nuclear ribonucleoprotein G-like protein 15 (76 aa).

A Sm domain is found at 4-76 (AHPPELKKFT…IIMLEALERV (73 aa)).

This sequence belongs to the snRNP Sm proteins family.

The protein resides in the nucleus. Its function is as follows. Associated with snRNP U1, U2, U4/U6 and U5. The polypeptide is Putative small nuclear ribonucleoprotein G-like protein 15 (SNRPGP15) (Homo sapiens (Human)).